The sequence spans 255 residues: Flagellar brake protein YcgR (255 aa).

The PilZ domain maps to 130-245 (QRREHFRVPL…MAAHLQRFVM (116 aa)).

This sequence belongs to the YcgR family. Monomer. Interacts with the flagellar basal bodies.

It is found in the bacterial flagellum basal body. Functionally, acts as a flagellar brake, regulating swimming and swarming in a bis-(3'-5') cyclic diguanylic acid (c-di-GMP)-dependent manner. Binds 1 c-di-GMP dimer per subunit. Increasing levels of c-di-GMP lead to decreased motility. The sequence is that of Flagellar brake protein YcgR from Thiobacillus denitrificans (strain ATCC 25259 / T1).